We begin with the raw amino-acid sequence, 1396 residues long: Probable ATP-dependent RNA helicase spindle-E (1396 aa).

The tract at residues 1-34 (MDEAAGPSTSRTSNLEDVDDEGASLAEEDEEHTK) is disordered. Acidic residues predominate over residues 16 to 30 (EDVDDEGASLAEEDE). One can recognise a Helicase ATP-binding domain in the interval 68–234 (LDKIRSNAVV…FKIPKKSGYL (167 aa)). An ATP-binding site is contributed by 81–88 (GATGCGKT). The short motif at 180 to 183 (DEVH) is the DEAH box element. Residues 292–468 (KGQEFGDSLE…TVVLKAKLLE (177 aa)) enclose the Helicase C-terminal domain. Positions 885 to 950 (NFAMGQMVAA…RQLDDSLGQL (66 aa)) constitute a Tudor domain.

The protein belongs to the DEAD box helicase family. DEAH subfamily.

It is found in the cytoplasm. The enzyme catalyses ATP + H2O = ADP + phosphate + H(+). In terms of biological role, probable ATP-binding RNA helicase which plays a central role during gametogenesis by repressing transposable elements and preventing their mobilization, which is essential for the germline integrity. Acts via the piRNA metabolic process, which mediates the repression of transposable elements during meiosis by forming complexes composed of piRNAs and Piwi proteins and govern the methylation and subsequent repression of transposons. The chain is Probable ATP-dependent RNA helicase spindle-E (spn-E) from Culex quinquefasciatus (Southern house mosquito).